Consider the following 838-residue polypeptide: Protein P (838 aa).

The tract at residues 1–177 is terminal protein domain (TP); the sequence is MPLSYQHFRK…FCGSPYSWEQ (177 aa). The spacer stretch occupies residues 178-341; it reads ELQHQTSTRH…YCLTHIVNLL (164 aa). 2 disordered regions span residues 215–238 and 285–311; these read QSRL…SGSI and STSK…RSQS. A compositionally biased stretch (polar residues) spans 285-294; sequence STSKRQSSSG. The segment at 342 to 685 is polymerase/reverse transcriptase domain (RT); that stretch reads EDWGPCTEHG…YLHLYPVARQ (344 aa). One can recognise a Reverse transcriptase domain in the interval 352–595; that stretch reads EHNIRIPRTP…YSLNFMGYVI (244 aa). Residues aspartate 424, aspartate 546, and aspartate 547 each coordinate Mg(2+).

The protein belongs to the hepadnaviridae P protein family.

The catalysed reaction is DNA(n) + a 2'-deoxyribonucleoside 5'-triphosphate = DNA(n+1) + diphosphate. The enzyme catalyses Endonucleolytic cleavage to 5'-phosphomonoester.. Its activity is regulated as follows. Activated by host HSP70 and HSP40 in vitro to be able to bind the epsilon loop of the pgRNA. Because deletion of the RNase H region renders the protein partly chaperone-independent, the chaperones may be needed indirectly to relieve occlusion of the RNA-binding site by this domain. Inhibited by several reverse-transcriptase inhibitors: Lamivudine, Adefovir and Entecavir. Its function is as follows. Multifunctional enzyme that converts the viral RNA genome into dsDNA in viral cytoplasmic capsids. This enzyme displays a DNA polymerase activity that can copy either DNA or RNA templates, and a ribonuclease H (RNase H) activity that cleaves the RNA strand of RNA-DNA heteroduplexes in a partially processive 3'- to 5'-endonucleasic mode. Neo-synthesized pregenomic RNA (pgRNA) are encapsidated together with the P protein, and reverse-transcribed inside the nucleocapsid. Initiation of reverse-transcription occurs first by binding the epsilon loop on the pgRNA genome, and is initiated by protein priming, thereby the 5'-end of (-)DNA is covalently linked to P protein. Partial (+)DNA is synthesized from the (-)DNA template and generates the relaxed circular DNA (RC-DNA) genome. After budding and infection, the RC-DNA migrates in the nucleus, and is converted into a plasmid-like covalently closed circular DNA (cccDNA). The activity of P protein does not seem to be necessary for cccDNA generation, and is presumably released from (+)DNA by host nuclear DNA repair machinery. This Homo sapiens (Human) protein is Protein P.